The sequence spans 367 residues: Aminomethyltransferase (367 aa).

This sequence belongs to the GcvT family. As to quaternary structure, the glycine cleavage system is composed of four proteins: P, T, L and H.

The catalysed reaction is N(6)-[(R)-S(8)-aminomethyldihydrolipoyl]-L-lysyl-[protein] + (6S)-5,6,7,8-tetrahydrofolate = N(6)-[(R)-dihydrolipoyl]-L-lysyl-[protein] + (6R)-5,10-methylene-5,6,7,8-tetrahydrofolate + NH4(+). Functionally, the glycine cleavage system catalyzes the degradation of glycine. This is Aminomethyltransferase from Saccharopolyspora erythraea (strain ATCC 11635 / DSM 40517 / JCM 4748 / NBRC 13426 / NCIMB 8594 / NRRL 2338).